Reading from the N-terminus, the 217-residue chain is Small ribosomal subunit protein uS3 (217 aa).

A KH type-2 domain is found at 40 to 110 (IRDLINKGFN…EVYINIHEVR (71 aa)).

It belongs to the universal ribosomal protein uS3 family. In terms of assembly, part of the 30S ribosomal subunit. Forms a tight complex with proteins S10 and S14.

Its function is as follows. Binds the lower part of the 30S subunit head. Binds mRNA in the 70S ribosome, positioning it for translation. The polypeptide is Small ribosomal subunit protein uS3 (Rickettsia africae (strain ESF-5)).